Reading from the N-terminus, the 209-residue chain is Transcription factor 23 (209 aa).

Disordered stretches follow at residues 1 to 20 (MSQE…GHNK) and 54 to 85 (LSRA…ARER). Residues 72–85 (GRSEASPENAARER) show a composition bias toward basic and acidic residues. A bHLH domain is found at 75-127 (EASPENAARERTRVKTLRQAFLALQAALPAVPPDTKLSKLDVLVLATSYIAHL).

As to quaternary structure, forms inactive heterodimeric complex with TCF3. Highly expressed in the uterus (predominantly in myometrium), ovary, and testis. Expression in the uterus is higher in the diestrus phase than in the estrus phase and reaches a maximum at 7.5 dpc. Expression declines towards the time of delivery and returns to the non-pregnant level 4 days after delivery. Low expression seen in lung, heart, intestine, and spleen.

The protein resides in the nucleus. Its function is as follows. Inhibits E-box-mediated binding and transactivation of bHLH factors. Inhibitory effect is similar to that of ID proteins. Inhibits the formation of TCF3 and MYOD1 homodimers and heterodimers. Lacks DNA binding activity. May be involved in the regulation or modulation of smooth muscle contraction of the uterus during pregnancy and particularly around the time of delivery. Seems to play a role in the inhibition of myogenesis. In Mus musculus (Mouse), this protein is Transcription factor 23 (Tcf23).